The following is a 152-amino-acid chain: Psoriasis susceptibility 1 candidate gene 1 protein homolog (152 aa).

Polar residues predominate over residues 1–31 (MTCTDQKSHSQRALGTQTPALQGPQLLNTDP). Disordered stretches follow at residues 1-39 (MTCTDQKSHSQRALGTQTPALQGPQLLNTDPSSEETRPP) and 132-152 (APTLLYSPPPSHSPFGLSSLI).

This is Psoriasis susceptibility 1 candidate gene 1 protein homolog (PSORS1C1) from Pan troglodytes (Chimpanzee).